We begin with the raw amino-acid sequence, 103 residues long: Transcriptional regulator WhiB7 (103 aa).

Residues Cys-17, Cys-49, Cys-52, and Cys-58 each contribute to the [4Fe-4S] cluster site. The 4Fe-4S Wbl-type domain occupies 25-82; that stretch reads PCHVGDPDLWFAENPGDLERAKALCAGCPIRVQCLTAALERQEPWGVWGGEILDRGSI. The interval 82-103 is disordered; the sequence is IVARKRPRGRPRKDSGGNPAAA.

This sequence belongs to the WhiB family. [4Fe-4S] cluster is required as a cofactor. Post-translationally, the Fe-S cluster can be nitrosylated by nitric oxide (NO). Upon Fe-S cluster removal intramolecular disulfide bonds are formed.

It is found in the cytoplasm. Its function is as follows. Acts as a transcriptional regulator. Probably redox-responsive. The apo- but not holo-form probably binds DNA. Participates in maintaining a reduced cytoplasmic (MSH/MSSM) environment under normal growth conditions and directly or indirectly controls the concentration of mycothiol (MSH + MSSM). This chain is Transcriptional regulator WhiB7 (whiB7), found in Mycolicibacterium smegmatis (strain ATCC 700084 / mc(2)155) (Mycobacterium smegmatis).